Reading from the N-terminus, the 226-residue chain is Elongation factor 1-delta 2 (226 aa).

Residues 82-131 (TACSVSPTADQKAPAADEEDDDDVDLFGEETEEEKKAAEERAAAVKASGK) are disordered. Positions 97-113 (ADEEDDDDVDLFGEETE) are enriched in acidic residues. Residues 114–124 (EEKKAAEERAA) are compositionally biased toward basic and acidic residues.

It belongs to the EF-1-beta/EF-1-delta family. EF-1 is composed of 4 subunits: alpha, beta (1B-alpha=beta'), delta (1B-beta), and gamma (1B-gamma).

In terms of biological role, EF-1-beta and EF-1-beta' stimulate the exchange of GDP bound to EF-1-alpha to GTP. This Oryza sativa subsp. japonica (Rice) protein is Elongation factor 1-delta 2.